We begin with the raw amino-acid sequence, 449 residues long: Clusterin (449 aa).

The first 21 residues, 1 to 21 (MKTLLLLVGLLLTLENGQVLG), serve as a signal peptide directing secretion. The short motif at 77-80 (KKKK) is the Nuclear localization signal element. Asparagine 85 and asparagine 102 each carry an N-linked (GlcNAc...) asparagine glycan. 5 cysteine pairs are disulfide-bonded: cysteine 101/cysteine 313, cysteine 112/cysteine 305, cysteine 115/cysteine 302, cysteine 120/cysteine 295, and cysteine 128/cysteine 285. Residue serine 132 is modified to Phosphoserine. N-linked (GlcNAc...) asparagine glycans are attached at residues asparagine 144, asparagine 291, asparagine 328, asparagine 354, and asparagine 374. Serine 396 is modified (phosphoserine). The Nuclear localization signal motif lies at 443–447 (RQKNR).

Belongs to the clusterin family. Antiparallel disulfide-linked heterodimer of an alpha chain and a beta chain. Self-associates and forms higher oligomers. Interacts with a broad range of misfolded proteins, including APP, APOC2 and LYZ. Slightly acidic pH promotes interaction with misfolded proteins. Forms high-molecular weight oligomers upon interaction with misfolded proteins. Interacts with APOA1, LRP2, CLUAP1 and PON1. Interacts with the complement membrane attack complex. Interacts (via alpha chain) with XRCC6. Interacts with SYVN1, COMMD1, BTRC, CUL1 and with ubiquitin and SCF (SKP1-CUL1-F-box protein) E3 ubiquitin-protein ligase complexes. Interacts (via alpha chain) with BAX in stressed cells, where BAX undergoes a conformation change leading to association with the mitochondrial membrane. Does not interact with BAX in unstressed cells. Found in a complex with LTF, CLU, EPPIN and SEMG1. Interacts (immaturely glycosylated pre-secreted form) with HSPA5; this interaction promotes CLU stability and facilitates stress-induced CLU retrotranslocation from the secretory pathway to the mitochondria, thereby reducing stress-induced apoptosis by stabilizing mitochondrial membrane integrity. Interacts with BCL2L1; this interaction releases and activates BAX and promotes cell death. Interacts with TGFBR2 and ACVR1. Interacts (secreted form) with STMN3; this interaction may act as an important modulator during neuronal differentiation. Interacts with VLDLR and LRP8. Post-translationally, proteolytically cleaved on its way through the secretory system, probably within the Golgi lumen. Proteolytic cleavage is not necessary for its chaperone activity. All non-secreted forms are not proteolytically cleaved. Chaperone activity of uncleaved forms is dependent on a non-reducing environment. In terms of processing, polyubiquitinated, leading to proteasomal degradation. Under cellular stress, the intracellular level of cleaved form is reduced due to proteasomal degradation. Heavily N-glycosylated. About 30% of the protein mass is comprised of complex N-linked carbohydrate. Endoplasmic reticulum (ER) stress induces changes in glycosylation status and increases level of hypoglycosylated forms. Core carbohydrates are essential for chaperone activity. Non-secreted forms are hypoglycosylated or unglycosylated.

The protein resides in the secreted. It is found in the nucleus. It localises to the cytoplasm. The protein localises to the mitochondrion membrane. Its subcellular location is the cytosol. The protein resides in the microsome. It is found in the endoplasmic reticulum. It localises to the mitochondrion. The protein localises to the perinuclear region. Its subcellular location is the cytoplasmic vesicle. The protein resides in the secretory vesicle. It is found in the chromaffin granule. Functions as extracellular chaperone that prevents aggregation of non native proteins. Prevents stress-induced aggregation of blood plasma proteins. Inhibits formation of amyloid fibrils by APP, APOC2, B2M, CALCA, CSN3, SNCA and aggregation-prone LYZ variants (in vitro). Does not require ATP. Maintains partially unfolded proteins in a state appropriate for subsequent refolding by other chaperones, such as HSPA8/HSC70. Does not refold proteins by itself. Binding to cell surface receptors triggers internalization of the chaperone-client complex and subsequent lysosomal or proteasomal degradation. When secreted, protects cells against apoptosis and against cytolysis by complement: inhibits assembly of the complement membrane attack complex (MAC) by preventing polymerization of C9 pore component of the MAC complex. Intracellular forms interact with ubiquitin and SCF (SKP1-CUL1-F-box protein) E3 ubiquitin-protein ligase complexes and promote the ubiquitination and subsequent proteasomal degradation of target proteins. Promotes proteasomal degradation of COMMD1 and IKBKB. Modulates NF-kappa-B transcriptional activity. Following stress, promotes apoptosis. Inhibits apoptosis when associated with the mitochondrial membrane by interference with BAX-dependent release of cytochrome c into the cytoplasm. Plays a role in the regulation of cell proliferation. An intracellular form suppresses stress-induced apoptosis by stabilizing mitochondrial membrane integrity through interaction with HSPA5. Secreted form does not affect caspase or BAX-mediated intrinsic apoptosis and TNF-induced NF-kappa-B-activity. Secreted form act as an important modulator during neuronal differentiation through interaction with STMN3. Plays a role in the clearance of immune complexes that arise during cell injury. The polypeptide is Clusterin (CLU) (Equus caballus (Horse)).